Consider the following 127-residue polypeptide: Large ribosomal subunit protein bL20 (127 aa).

The protein belongs to the bacterial ribosomal protein bL20 family.

Functionally, binds directly to 23S ribosomal RNA and is necessary for the in vitro assembly process of the 50S ribosomal subunit. It is not involved in the protein synthesizing functions of that subunit. The sequence is that of Large ribosomal subunit protein bL20 from Corynebacterium aurimucosum (strain ATCC 700975 / DSM 44827 / CIP 107346 / CN-1) (Corynebacterium nigricans).